A 285-amino-acid chain; its full sequence is MDTTTVLDKYTQDLSNLPLEVKHLLQELKNKDVQLQEARKRYQTKDNQIHKFIRANGTLTKHPKEQQIYNKVEEDMVLVKKLQKEKILLANTALFLVSKHLSNFETDIAKLEKDELLPPVDNVMELDTPSSDMNSVINGLSDNLSGTTTPRGHSASTPVADNAANSMLRKAQKRKHALGMKGASGLTRPSKRMKSEDFEDKKYDNDSLSRPNEGPGNNGEDADNNLYCFCQRVSFGEMIGCDNDDCKFEWFHWSCVGITAPPKDDEIWYCPDCAPKMEKRKKKRK.

Positions 19 to 54 (LEVKHLLQELKNKDVQLQEARKRYQTKDNQIHKFIR) form a coiled coil. Residues 138–165 (NGLSDNLSGTTTPRGHSASTPVADNAAN) are compositionally biased toward polar residues. The tract at residues 138 to 218 (NGLSDNLSGT…SRPNEGPGNN (81 aa)) is disordered. Residues 193 to 207 (MKSEDFEDKKYDNDS) are compositionally biased toward basic and acidic residues. A PHD-type zinc finger spans residues 225-276 (NLYCFCQRVSFGEMIGCDNDDCKFEWFHWSCVGITAPPKDDEIWYCPDCAPK). Positions 228, 230, 241, 246, 252, 255, 270, and 273 each coordinate Zn(2+).

Belongs to the ING family. In terms of assembly, interacts with H3K4me3 and to a lesser extent with H3K4me2. Component of the NuA4 histone acetyltransferase complex.

The protein resides in the nucleus. Functionally, component of the NuA4 histone acetyltransferase complex which is involved in transcriptional activation of selected genes principally by acetylation of nucleosomal histone H4 and H2A. The NuA4 complex is also involved in DNA repair. Involved in cell cycle progression and meiosis. This is Chromatin modification-related protein YNG2 (YNG2) from Debaryomyces hansenii (strain ATCC 36239 / CBS 767 / BCRC 21394 / JCM 1990 / NBRC 0083 / IGC 2968) (Yeast).